The primary structure comprises 494 residues: Hepatic triacylglycerol lipase (494 aa).

Positions 1–21 (MGNHLQISVSLVLCIFIQSSA) are cleaved as a signal peptide. An N-linked (GlcNAc...) asparagine glycan is attached at asparagine 79. The Nucleophile role is filled by serine 169. Residue aspartate 195 is the Charge relay system of the active site. Residues 255-278 (CHFLELYKHIAEHGLNAITQTINC) are essential for determining substrate specificity. Histidine 280 (charge relay system) is an active-site residue. Residues 353–487 (YHYQFKIQFI…HPTQEKVFVK (135 aa)) form the PLAT domain. N-linked (GlcNAc...) asparagine glycosylation occurs at asparagine 398.

The protein belongs to the AB hydrolase superfamily. Lipase family. As to quaternary structure, homodimer.

Its subcellular location is the secreted. It catalyses the reaction a triacylglycerol + H2O = a diacylglycerol + a fatty acid + H(+). The enzyme catalyses a 1-acyl-sn-glycero-3-phosphocholine + H2O = sn-glycerol 3-phosphocholine + a fatty acid + H(+). The catalysed reaction is a 1,2-diacyl-sn-glycero-3-phosphocholine + H2O = a 2-acyl-sn-glycero-3-phosphocholine + a fatty acid + H(+). It carries out the reaction 1,2-di-(9Z-octadecenoyl)-sn-glycerol + H2O = 2-(9Z-octadecenoyl)-glycerol + (9Z)-octadecenoate + H(+). It catalyses the reaction 1,2,3-tri-(9Z-octadecenoyl)-glycerol + H2O = 2,3-di-(9Z)-octadecenoyl-sn-glycerol + (9Z)-octadecenoate + H(+). The enzyme catalyses 1-(9Z-octadecenoyl)-sn-glycero-3-phospho-L-serine + H2O = sn-glycero-3-phospho-L-serine + (9Z)-octadecenoate + H(+). The catalysed reaction is 1-hexadecanoyl-sn-glycero-3-phosphocholine + H2O = sn-glycerol 3-phosphocholine + hexadecanoate + H(+). It carries out the reaction 1,3-di-(9Z-octadecenoyl)-glycerol + H2O = 3-(9Z-octadecenoyl)-sn-glycerol + (9Z)-octadecenoate + H(+). It catalyses the reaction 1,2,3-tri-(9Z-octadecenoyl)-glycerol + H2O = di-(9Z)-octadecenoylglycerol + (9Z)-octadecenoate + H(+). The enzyme catalyses 1,2-di-(9Z-octadecenoyl)-sn-glycero-3-phosphocholine + H2O = (9Z-octadecenoyl)-sn-glycero-3-phosphocholine + (9Z)-octadecenoate + H(+). The catalysed reaction is 1,2,3-tributanoylglycerol + H2O = dibutanoylglycerol + butanoate + H(+). It carries out the reaction 1,2-dihexadecanoyl-sn-glycero-3-phosphocholine + H2O = hexadecanoyl-sn-glycero-3-phosphocholine + hexadecanoate + H(+). With respect to regulation, phospholipase A1 and lysophospholipase activities are inhibited by annexin II. In terms of biological role, catalyzes the hydrolysis of triglycerides and phospholipids present in circulating plasma lipoproteins, including chylomicrons, intermediate density lipoproteins (IDL), low density lipoproteins (LDL) of large size and high density lipoproteins (HDL), releasing free fatty acids (FFA) and smaller lipoprotein particles. Also exhibits lysophospholipase activity. Can hydrolyze both neutral lipid and phospholipid substrates but shows a greater binding affinity for neutral lipid substrates than phospholipid substrates. In native LDL, preferentially hydrolyzes the phosphatidylcholine species containing polyunsaturated fatty acids at sn-2 position. This Rattus norvegicus (Rat) protein is Hepatic triacylglycerol lipase (Lipc).